Reading from the N-terminus, the 62-residue chain is Large ribosomal subunit protein bL32 (62 aa).

Over residues 1–16 (MAVPKRKTSPSRRGMR) the composition is skewed to basic residues. The disordered stretch occupies residues 1–62 (MAVPKRKTSP…QILKPKTAEV (62 aa)). Positions 28 to 44 (VEDKDSGELRRPHHLDL) are enriched in basic and acidic residues.

The protein belongs to the bacterial ribosomal protein bL32 family.

The protein is Large ribosomal subunit protein bL32 of Azorhizobium caulinodans (strain ATCC 43989 / DSM 5975 / JCM 20966 / LMG 6465 / NBRC 14845 / NCIMB 13405 / ORS 571).